A 122-amino-acid polypeptide reads, in one-letter code: Large ribosomal subunit protein uL14 (122 aa).

This sequence belongs to the universal ribosomal protein uL14 family. As to quaternary structure, part of the 50S ribosomal subunit. Forms a cluster with proteins L3 and L19. In the 70S ribosome, L14 and L19 interact and together make contacts with the 16S rRNA in bridges B5 and B8.

Functionally, binds to 23S rRNA. Forms part of two intersubunit bridges in the 70S ribosome. The polypeptide is Large ribosomal subunit protein uL14 (Agathobacter rectalis (strain ATCC 33656 / DSM 3377 / JCM 17463 / KCTC 5835 / VPI 0990) (Eubacterium rectale)).